The primary structure comprises 2145 residues: Adenylate cyclase (2145 aa).

Disordered regions lie at residues Met-1–Asp-115, Asp-127–Arg-236, Gly-266–Lys-307, and Val-329–Asp-547. Low complexity-rich tracts occupy residues Ser-7 to Ser-23, Pro-35 to Arg-68, and Ser-89 to Ser-107. Polar residues-rich tracts occupy residues Ser-134–Gln-148 and Pro-159–Pro-205. Residues Ser-217–Gly-234 are compositionally biased toward low complexity. A compositionally biased stretch (basic residues) spans His-269–Arg-281. Positions Asn-343 to Ser-357 are enriched in polar residues. Residues Lys-377–Asn-403 are compositionally biased toward basic and acidic residues. Over residues Gly-404–Gly-441 the composition is skewed to polar residues. 2 stretches are compositionally biased toward basic and acidic residues: residues Arg-454 to Lys-466 and Ala-495 to Leu-511. In terms of domain architecture, Ras-associating spans His-637 to Ser-727. 15 LRR repeats span residues Glu-779–Val-800, Asn-803–Ala-824, Arg-826–Asn-847, Gly-850–Phe-871, Val-873–Leu-894, Asn-896–Met-917, Ser-919–Leu-941, Ser-943–Pro-964, Lys-965–Val-986, Arg-987–Pro-1006, Thr-1007–Met-1028, Asn-1030–Leu-1051, Arg-1053–Leu-1074, Glu-1076–Ala-1097, and Lys-1099–Ala-1120. The disordered stretch occupies residues Pro-1114–Gln-1226. Composition is skewed to low complexity over residues Arg-1160 to Gly-1179 and Ser-1201 to Ser-1217. LRR repeat units lie at residues Ser-1235–Cys-1255, Asn-1259–Ser-1280, Gln-1283–Glu-1304, Met-1307–Ala-1328, Lys-1330–Trp-1352, and Asn-1359–Thr-1380. The region spanning Pro-1432 to Val-1709 is the PPM-type phosphatase domain. Positions Arg-1718–Arg-1760 are disordered. The Guanylate cyclase domain occupies Ala-1773–Ser-1910. Mg(2+)-binding residues include Asp-1778 and Asp-1821.

This sequence belongs to the adenylyl cyclase class-3 family. The cofactor is Mg(2+).

The catalysed reaction is ATP = 3',5'-cyclic AMP + diphosphate. Plays essential roles in regulation of cellular metabolism by catalyzing the synthesis of a second messenger, cAMP. This Podospora anserina (Pleurage anserina) protein is Adenylate cyclase.